The sequence spans 274 residues: Mitochondrial outer membrane protein porin 1 (274 aa).

It belongs to the eukaryotic mitochondrial porin (TC 1.B.8.1) family. As to expression, expressed in shoots and roots. Also expressed in callus, leaves, panicles, sheaths and stems.

It localises to the mitochondrion outer membrane. Forms a channel through the mitochondrial outer membrane that allows diffusion of small hydrophilic molecules. The channel adopts an open conformation at low or zero membrane potential and a closed conformation at potentials above 30-40 mV. The open state has a weak anion selectivity whereas the closed state is cation-selective. The chain is Mitochondrial outer membrane protein porin 1 (VDAC1) from Oryza sativa subsp. japonica (Rice).